The primary structure comprises 589 residues: MSVSVHENRKSRTSTGSMNISLYHKLSHSECVLNHLNTMRKQRLFTDMTLWAGNRSFPCHRAVLAACSPYFEAMFSNGLRESLDNTVNFHNSLHPEVLELLLDFAYSSKIIINEENAESLLEAGDMLQFHDVRDAACEFLEKNLYPSNCLGMMILSDAHQCQRLYELSLRMCLSNFATLHNTEDFSSLSKDMLLDLISSDELEIEDEQVVFNAVLHWVKEDLDKRKDYFPELLRNVRLALLPSELLKEAVVCEDLIIADERSKLIMDEAVQCKKKILQNDGVVTSLCAKPRKAGHTLLILGGQTFMCDKIYQLDHKAKEIIPKADLPSPRKEFSACAIGCKVYITGGRGSENGVSKDVWVYDTIHEEWSKSAPMLIARFGHGSAELDNCLYVVGGHTAVAGVFPASPSVSLKQVEKYDPLPNKWTMMAPLRDGVSNAAVVSAKLKLFVFGGTSIHRDRVSKVQFYDPHENRWSIKAECPQPWRYTAAAVLGSQIFIMGGDTEFTAASAYRFDCETNLWTRIGDMTAKRMSCHALASGNKVYVVGGYFGTQRCKTLDCYDPTSDSWNSITSVPYSLIPTAFVSTWKHLPA.

Positions 46–114 constitute a BTB domain; the sequence is TDMTLWAGNR…AYSSKIIINE (69 aa). The BACK domain occupies 149-250; sequence CLGMMILSDA…LPSELLKEAV (102 aa). Kelch repeat units lie at residues 296-340, 341-388, 389-444, 446-492, 494-538, and 539-585; these read TLLI…AIGC, KVYI…ELDN, CLYV…SAKL, LFVF…VLGS, IFIM…ASGN, and KVYV…STWK.

As to quaternary structure, component of the BCR(KLHL25) E3 ubiquitin ligase complex, at least composed of cul3, klhl25 and rbx1.

Its pathway is protein modification; protein ubiquitination. Its function is as follows. Substrate-specific adapter of a BCR (BTB-CUL3-RBX1) E3 ubiquitin ligase complex involved in various processes, such as translation homeostasis and lipid synthesis. The BCR(KLHL25) ubiquitin ligase complex acts by mediating ubiquitination of hypophosphorylated eif4ebp1 (4E-BP1): ubiquitination and subsequent degradation of hypophosphorylated EIF4EBP1 (4E-BP1) probably serves as a homeostatic mechanism to maintain translation and prevent eIF4E inhibition when eIF4E levels are low. The BCR(KLHL25) complex also acts as a regulator of lipid synthesis by mediating ubiquitination and degradation of ACLY, thereby inhibiting lipid synthesis. This chain is Kelch-like protein 25, found in Xenopus laevis (African clawed frog).